The following is a 654-amino-acid chain: Macrolide export ATP-binding/permease protein MacB (654 aa).

An ABC transporter domain is found at 6-244 (LKVEDLTRRF…EQAAKTPSAS (239 aa)). An ATP-binding site is contributed by 42–49 (GASGSGKS). 4 helical membrane-spanning segments follow: residues 280–300 (FLTMLGIIIGIASVVSVVALG), 529–549 (LLISAIAVISLIVGGIGVMNI), 584–604 (LVCLCGGIAGIGLAFLIGFAF), and 619–639 (SIIWAFICSTLIGIAFGFLPA).

Belongs to the ABC transporter superfamily. Macrolide exporter (TC 3.A.1.122) family. As to quaternary structure, homodimer. Part of the tripartite efflux system MacAB-TolC, which is composed of an inner membrane transporter, MacB, a periplasmic membrane fusion protein, MacA, and an outer membrane component, TolC. The complex forms a large protein conduit and can translocate molecules across both the inner and outer membranes. Interacts with MacA.

Its subcellular location is the cell inner membrane. Functionally, part of the tripartite efflux system MacAB-TolC. MacB is a non-canonical ABC transporter that contains transmembrane domains (TMD), which form a pore in the inner membrane, and an ATP-binding domain (NBD), which is responsible for energy generation. Confers resistance against macrolides. The sequence is that of Macrolide export ATP-binding/permease protein MacB from Vibrio parahaemolyticus serotype O3:K6 (strain RIMD 2210633).